Here is a 204-residue protein sequence, read N- to C-terminus: Urease accessory protein UreG (204 aa).

Position 11-18 (11-18 (GPVGAGKT)) interacts with GTP.

The protein belongs to the SIMIBI class G3E GTPase family. UreG subfamily. Homodimer. UreD, UreF and UreG form a complex that acts as a GTP-hydrolysis-dependent molecular chaperone, activating the urease apoprotein by helping to assemble the nickel containing metallocenter of UreC. The UreE protein probably delivers the nickel.

The protein resides in the cytoplasm. In terms of biological role, facilitates the functional incorporation of the urease nickel metallocenter. This process requires GTP hydrolysis, probably effectuated by UreG. This is Urease accessory protein UreG from Staphylococcus saprophyticus subsp. saprophyticus (strain ATCC 15305 / DSM 20229 / NCIMB 8711 / NCTC 7292 / S-41).